The primary structure comprises 406 residues: Purine nucleoside permease (406 aa).

The first 22 residues, 1 to 22 (MKLSTLFTLATTISTLTTFTIA), serve as a signal peptide directing secretion.

This sequence belongs to the NUP family. Post-translationally, predicted to be a substrate for cleavage by KEX2.

With respect to regulation, mammalian nucleoside transport inhibitors dipyridamole and NBMPR inhibit adenosine transport by NUP. In terms of biological role, nucleoside permease that transports adenosine and guanosine. Does not show any transport activities towards cytidine, adenine, guanine, uridine, and uracil. The protein is Purine nucleoside permease of Candida albicans (strain SC5314 / ATCC MYA-2876) (Yeast).